A 171-amino-acid polypeptide reads, in one-letter code: Zinc uptake regulation protein (171 aa).

This sequence belongs to the Fur family.

Acts as a negative controlling element, employing Zn(2+) as a cofactor to bind the operator of the repressed genes (znuACB). This chain is Zinc uptake regulation protein (zur), found in Escherichia coli (strain K12).